We begin with the raw amino-acid sequence, 417 residues long: Serine hydroxymethyltransferase 1 (417 aa).

Residues Leu-121 and Gly-125–Leu-127 each bind (6S)-5,6,7,8-tetrahydrofolate. Position 230 is an N6-(pyridoxal phosphate)lysine (Lys-230). Ser-355 to Phe-357 is a (6S)-5,6,7,8-tetrahydrofolate binding site.

Belongs to the SHMT family. Homodimer. The cofactor is pyridoxal 5'-phosphate.

Its subcellular location is the cytoplasm. It catalyses the reaction (6R)-5,10-methylene-5,6,7,8-tetrahydrofolate + glycine + H2O = (6S)-5,6,7,8-tetrahydrofolate + L-serine. The protein operates within one-carbon metabolism; tetrahydrofolate interconversion. Its pathway is amino-acid biosynthesis; glycine biosynthesis; glycine from L-serine: step 1/1. In terms of biological role, catalyzes the reversible interconversion of serine and glycine with tetrahydrofolate (THF) serving as the one-carbon carrier. This reaction serves as the major source of one-carbon groups required for the biosynthesis of purines, thymidylate, methionine, and other important biomolecules. Also exhibits THF-independent aldolase activity toward beta-hydroxyamino acids, producing glycine and aldehydes, via a retro-aldol mechanism. This Pseudomonas putida (strain ATCC 47054 / DSM 6125 / CFBP 8728 / NCIMB 11950 / KT2440) protein is Serine hydroxymethyltransferase 1.